The primary structure comprises 149 residues: Ribonuclease pancreatic (149 aa).

A signal peptide spans 1-25; that stretch reads MGLEKSFILFPLLILVLGWVQSSLG. Positions 32 and 35 each coordinate substrate. Residue His-37 is the Proton acceptor of the active site. Disulfide bonds link Cys-51–Cys-109, Cys-65–Cys-120, Cys-83–Cys-135, and Cys-90–Cys-97. The N-linked (GlcNAc...) asparagine glycan is linked to Asn-59. 66–70 serves as a coordination point for substrate; that stretch reads KPVNT. N-linked (GlcNAc...) asparagine glycosylation is present at Asn-87. 2 residues coordinate substrate: Lys-91 and Arg-110. The Proton donor role is filled by His-144.

Belongs to the pancreatic ribonuclease family. As to quaternary structure, monomer. Interacts with and forms tight 1:1 complexes with RNH1. Dimerization of two such complexes may occur. Interaction with RNH1 inhibits this protein. In terms of tissue distribution, pancreas.

The protein resides in the secreted. It carries out the reaction an [RNA] containing cytidine + H2O = an [RNA]-3'-cytidine-3'-phosphate + a 5'-hydroxy-ribonucleotide-3'-[RNA].. The enzyme catalyses an [RNA] containing uridine + H2O = an [RNA]-3'-uridine-3'-phosphate + a 5'-hydroxy-ribonucleotide-3'-[RNA].. In terms of biological role, endonuclease that catalyzes the cleavage of RNA on the 3' side of pyrimidine nucleotides. Acts on single-stranded and double-stranded RNA. In Abrothrix jelskii (Jelski's altiplano mouse), this protein is Ribonuclease pancreatic (RNASE1).